Here is a 100-residue protein sequence, read N- to C-terminus: MKISEEEVRHVAALSKLSFSESETTEFATTLSKIVDMVELLNEVDTTGVAITTTMADKKNIMRADIAEAGVDRKLLFQNVPEKENHFIKVPAILDDGGDA.

This sequence belongs to the GatC family. Heterotrimer of A, B and C subunits.

The enzyme catalyses L-glutamyl-tRNA(Gln) + L-glutamine + ATP + H2O = L-glutaminyl-tRNA(Gln) + L-glutamate + ADP + phosphate + H(+). It carries out the reaction L-aspartyl-tRNA(Asn) + L-glutamine + ATP + H2O = L-asparaginyl-tRNA(Asn) + L-glutamate + ADP + phosphate + 2 H(+). Functionally, allows the formation of correctly charged Asn-tRNA(Asn) or Gln-tRNA(Gln) through the transamidation of misacylated Asp-tRNA(Asn) or Glu-tRNA(Gln) in organisms which lack either or both of asparaginyl-tRNA or glutaminyl-tRNA synthetases. The reaction takes place in the presence of glutamine and ATP through an activated phospho-Asp-tRNA(Asn) or phospho-Glu-tRNA(Gln). The sequence is that of Aspartyl/glutamyl-tRNA(Asn/Gln) amidotransferase subunit C from Streptococcus equi subsp. equi (strain 4047).